The sequence spans 599 residues: Adenine deaminase (599 aa).

Belongs to the metallo-dependent hydrolases superfamily. Adenine deaminase family. It depends on Mn(2+) as a cofactor.

The catalysed reaction is adenine + H2O + H(+) = hypoxanthine + NH4(+). This chain is Adenine deaminase, found in Clostridium botulinum (strain 657 / Type Ba4).